A 370-amino-acid chain; its full sequence is MDANVSARINLMRILLISGIVFVHVPYNPQWSPFLGNYGMLDWLRVFLGESLFRIGVPCLSAISGYLLFRRGLADFDYWKTLKTKARTVLLPFLIWSGSFFVVVYAIQRQGLGFGYLPDTINATPRQWLSMAFAVEATPVNLPLYFLRDLMLCILLSPLLALLVSRYPRVTLLALLAYAILPLPNGIFLKKSILFGFSAGIYASLHGVNIKMLDRFAAPIAAGFLAIAVVIAVGLYYTGPDFPLWLDMALRLTSIAGIIGSWAISELLVRTRFGEKLGRGSGLSFWIFCGHYPLLVLFWMIWNRTGLSYYPLFYFTAPFIAIAILVASHNLVRRLAPDLLAVLTGSRTGAKRMATQPPQGAQAGYSPQQR.

The next 10 membrane-spanning stretches (helical) occupy residues 14 to 34, 46 to 66, 88 to 108, 144 to 164, 170 to 190, 193 to 213, 216 to 236, 244 to 264, 282 to 302, and 307 to 327; these read ILLI…WSPF, VFLG…ISGY, TVLL…YAIQ, LYFL…ALLV, VTLL…IFLK, ILFG…IKML, FAAP…VGLY, LWLD…SWAI, GLSF…WMIW, and LSYY…ILVA. The disordered stretch occupies residues 350-370; sequence AKRMATQPPQGAQAGYSPQQR.

The protein belongs to the acyltransferase 3 family.

Its subcellular location is the cell membrane. Its pathway is glycan metabolism; exopolysaccharide biosynthesis. Its function is as follows. Required for the succinyl modification of the seventh sugar (glucose) of the octasaccharide subunit of succinoglycan (EPS I). The protein is Succinoglycan biosynthesis protein ExoH (exoH) of Rhizobium meliloti (strain 1021) (Ensifer meliloti).